The chain runs to 776 residues: Serine/threonine-protein kinase SIK1 (776 aa).

The Protein kinase domain occupies 27–278; that stretch reads YDVERTLGKG…IAQIRQHRWM (252 aa). Residues 33–41 and lysine 56 contribute to the ATP site; that span reads LGKGNFAVV. The active-site Proton acceptor is aspartate 149. A Phosphothreonine; by LKB1 and GSK3-beta modification is found at threonine 182. Residue serine 186 is modified to Phosphoserine; by autocatalysis. In terms of domain architecture, UBA spans 303–343; sequence DYNEQVLGIMQALGIDRQRTVESLQNSSYNHFAAIYYLLLE. At threonine 322 the chain carries Phosphothreonine; by CaMK1. Disordered stretches follow at residues 350 to 371 and 449 to 472; these read STQP…RNSD and EARQ…STGR. Position 577 is a phosphoserine; by PKA (serine 577). The RK-rich region stretch occupies residues 586 to 612; the sequence is KAFRQQLRKNARTKGFLGLNKIKGLAR. Residues 621–643 form a disordered region; the sequence is GSRGGMSTFHTPAPSSGLQGCTA. Positions 628–643 are enriched in polar residues; that stretch reads TFHTPAPSSGLQGCTA.

This sequence belongs to the protein kinase superfamily. CAMK Ser/Thr protein kinase family. AMPK subfamily. As to quaternary structure, interacts (when phosphorylated on Thr-182 and Ser-186) with YWHAZ. Interacts with ATP1A1. Mg(2+) is required as a cofactor. In terms of processing, phosphorylated at Thr-182 by STK11/LKB1 in complex with STE20-related adapter-alpha (STRADA) pseudo kinase and CAB39, leading to its activation. Phosphorylation at Thr-182 promotes autophosphorylation at Ser-186, which is required for sustained activity. Autophosphorylation at Ser-186 is maintained by sequential phosphorylation at Thr-182 by GSK3-beta. GSK3-beta cannot initiate phosphorylation at Thr-182, it can only maintain it. Phosphorylation at Ser-577 by PKA promotes translocation to the cytoplasm. Phosphorylation at Thr-322 by CaMK1 following intracellular sodium concentration leads to activation.

It is found in the cytoplasm. The protein localises to the nucleus. It carries out the reaction L-seryl-[protein] + ATP = O-phospho-L-seryl-[protein] + ADP + H(+). The enzyme catalyses L-threonyl-[protein] + ATP = O-phospho-L-threonyl-[protein] + ADP + H(+). Activated by phosphorylation on Thr-182. Also activated by phosphorylation on Thr-322 in response to increases in intracellular sodium in parallel with elevations in intracellular calcium through the reversible sodium/calcium exchanger. Its function is as follows. Serine/threonine-protein kinase involved in various processes such as cell cycle regulation, gluconeogenesis and lipogenesis regulation, muscle growth and differentiation and tumor suppression. Phosphorylates HDAC4, HDAC5, PPME1, SREBF1, CRTC1/TORC1 and CRTC2/TORC2. Acts as a tumor suppressor and plays a key role in p53/TP53-dependent anoikis, a type of apoptosis triggered by cell detachment: required for phosphorylation of p53/TP53 in response to loss of adhesion and is able to suppress metastasis. Part of a sodium-sensing signaling network, probably by mediating phosphorylation of PPME1: following increases in intracellular sodium, SIK1 is activated by CaMK1 and phosphorylates PPME1 subunit of protein phosphatase 2A (PP2A), leading to dephosphorylation of sodium/potassium-transporting ATPase ATP1A1 and subsequent increase activity of ATP1A1. Acts as a regulator of muscle cells by phosphorylating and inhibiting class II histone deacetylases HDAC4 and HDAC5, leading to promote expression of MEF2 target genes in myocytes. Also required during cardiomyogenesis by regulating the exit of cardiomyoblasts from the cell cycle via down-regulation of CDKN1C/p57Kip2. Acts as a regulator of hepatic gluconeogenesis by phosphorylating and repressing the CREB-specific coactivators CRTC1/TORC1 and CRTC2/TORC2, leading to inhibit CREB activity. Also regulates hepatic lipogenesis by phosphorylating and inhibiting SREBF1. In concert with CRTC1/TORC1, regulates the light-induced entrainment of the circadian clock by attenuating PER1 induction; represses CREB-mediated transcription of PER1 by phosphorylating and deactivating CRTC1/TORC1. This is Serine/threonine-protein kinase SIK1 (Sik1) from Rattus norvegicus (Rat).